Here is a 370-residue protein sequence, read N- to C-terminus: L-lactate oxidase (370 aa).

Positions 8-367 (DPDGMPVTLS…TPDLLTGFSG (360 aa)) constitute an FMN hydroxy acid dehydrogenase domain. Tyr34 is a binding site for pyruvate. FMN contacts are provided by residues 87–89 (PMA), Ser116, and Gln136. Tyr138 contributes to the pyruvate binding site. Residue Thr164 coordinates FMN. Arg173 contributes to the pyruvate binding site. FMN is bound by residues Lys238 and Ser260. The pyruvate site is built by His262 and Arg265. His262 acts as the Proton acceptor in catalysis. FMN is bound by residues 293–297 (DGGIR) and Arg317.

Belongs to the FMN-dependent alpha-hydroxy acid dehydrogenase family. As to quaternary structure, homotetramer. Requires FMN as cofactor.

The catalysed reaction is (S)-lactate + O2 = pyruvate + H2O2. The enzyme catalyses a (2S)-2-hydroxycarboxylate + O2 = a 2-oxocarboxylate + H2O2. It catalyses the reaction glycolate + O2 = glyoxylate + H2O2. It carries out the reaction 2-hydroxyoctadecanoate + O2 = 2-oxooctadecanoate + H2O2. In terms of biological role, catalyzes the oxidation of (S)-lactate (L-lactate) to pyruvate, with a reduction of O2 to H2O2. Is also able to use glycolate and to a lesser extent 2-hydroxyoctadecanoate as substrate. This is L-lactate oxidase from Roseobacter sp. (strain GAI101).